Reading from the N-terminus, the 443-residue chain is Eukaryotic translation initiation factor 3 subunit M (443 aa).

The PCI domain occupies Gly205–Ser375. A disordered region spans residues Glu413–Glu443. Positions Arg429–Glu443 are enriched in basic and acidic residues.

Belongs to the eIF-3 subunit M family. Component of the eukaryotic translation initiation factor 3 (eIF-3) complex.

Its subcellular location is the cytoplasm. Functionally, component of the eukaryotic translation initiation factor 3 (eIF-3) complex, which is involved in protein synthesis of a specialized repertoire of mRNAs and, together with other initiation factors, stimulates binding of mRNA and methionyl-tRNAi to the 40S ribosome. The eIF-3 complex specifically targets and initiates translation of a subset of mRNAs involved in cell proliferation. The polypeptide is Eukaryotic translation initiation factor 3 subunit M (Cryptococcus neoformans var. neoformans serotype D (strain B-3501A) (Filobasidiella neoformans)).